Consider the following 355-residue polypeptide: Chemerin-like receptor 2 (355 aa).

At 1-41 the chain is on the extracellular side; it reads MEDLEETLFEEFENYSYDLDYYSLESDLEEKVQLGVVHWVS. Asn14 carries N-linked (GlcNAc...) asparagine glycosylation. The helical transmembrane segment at 42–62 threads the bilayer; sequence LVLYCLAFVLGIPGNAIVIWF. Over 63–73 the chain is Cytoplasmic; that stretch reads TGFKWKKTVTT. A helical membrane pass occupies residues 74 to 94; that stretch reads LWFLNLAIADFIFLLFLPLYI. The Extracellular segment spans residues 95–112; the sequence is SYVAMNFHWPFGIWLCKA. Cys110 and Cys187 are disulfide-bonded. Residues 113 to 133 traverse the membrane as a helical segment; that stretch reads NSFTAQLNMFASVFFLTVISL. At 134–154 the chain is on the cytoplasmic side; it reads DHYIHLIHPVLSHRHRTLKNS. A helical transmembrane segment spans residues 155-175; sequence LIVIIFIWLLASLIGGPALYF. Topologically, residues 176–210 are extracellular; that stretch reads RDTVEFNNHTLCYNNFQKHDPDLTLIRHHVLTWVK. Residues 211–231 traverse the membrane as a helical segment; it reads FIIGYLFPLLTMSICYLCLIF. At 232-247 the chain is on the cytoplasmic side; that stretch reads KVKKRSILISSRHFWT. Residues 248–268 traverse the membrane as a helical segment; sequence ILVVVVAFVVCWTPYHLFSIW. The Extracellular segment spans residues 269–286; that stretch reads ELTIHHNSYSHHVMQAGI. The chain crosses the membrane as a helical span at residues 287 to 307; it reads PLSTGLAFLNSCLNPILYVLI. The Cytoplasmic segment spans residues 308–355; sequence SKKFQARFRSSVAEILKYTLWEVSCSGTVSEQLRNSETKNLCLLETAQ.

This sequence belongs to the chemokine-like receptor (CMKLR) family. Expressed in hippocampus.

Its subcellular location is the cell membrane. Receptor for chemoattractant adipokine chemerin/RARRES2 suggesting a role for this receptor in the regulation of inflammation and energy homesotasis. Signals mainly via beta-arrestin pathway. Binding of RARRES2 activates weakly G proteins, calcium mobilization and MAPK1/MAPK3 (ERK1/2) phosphorylation too. Also acts as a receptor for TAFA1, mediates its effects on neuronal stem-cell proliferation and differentiation via the activation of ROCK/ERK and ROCK/STAT3 signaling pathway. In terms of biological role, (Microbial infection) Coreceptor for HIV-1. This Homo sapiens (Human) protein is Chemerin-like receptor 2.